The primary structure comprises 165 residues: MSLPDKAFPVSWDQFHRDARALAWRIAGLDREWRAIVAITRGGLVPAAIICRELGIRLIETVCIASYHDYTSQGEMQVLKGIGASLLENQGEGVIVVDDLTDTGKTAAIVREMMPRAHFATVYAKPKGRPLIDTFVTEVSQDTWIYFPWDMGFTYQEPIAGGKRG.

5-phospho-alpha-D-ribose 1-diphosphate-binding positions include 41–42 (RG) and 98–106 (DDLTDTGKT). Residue D99 participates in Mg(2+) binding. Residues D102 and I145 each coordinate guanine. 2 residues coordinate xanthine: D102 and I145. GMP is bound by residues 102 to 106 (DTGKT) and 144 to 145 (WI).

The protein belongs to the purine/pyrimidine phosphoribosyltransferase family. XGPT subfamily. In terms of assembly, homotetramer. It depends on Mg(2+) as a cofactor.

Its subcellular location is the cell inner membrane. The enzyme catalyses GMP + diphosphate = guanine + 5-phospho-alpha-D-ribose 1-diphosphate. The catalysed reaction is XMP + diphosphate = xanthine + 5-phospho-alpha-D-ribose 1-diphosphate. It catalyses the reaction IMP + diphosphate = hypoxanthine + 5-phospho-alpha-D-ribose 1-diphosphate. It functions in the pathway purine metabolism; GMP biosynthesis via salvage pathway; GMP from guanine: step 1/1. It participates in purine metabolism; XMP biosynthesis via salvage pathway; XMP from xanthine: step 1/1. Functionally, purine salvage pathway enzyme that catalyzes the transfer of the ribosyl-5-phosphate group from 5-phospho-alpha-D-ribose 1-diphosphate (PRPP) to the N9 position of the 6-oxopurines guanine and xanthine to form the corresponding ribonucleotides GMP (guanosine 5'-monophosphate) and XMP (xanthosine 5'-monophosphate), with the release of PPi. To a lesser extent, also acts on hypoxanthine. The chain is Xanthine-guanine phosphoribosyltransferase from Brucella canis (strain ATCC 23365 / NCTC 10854 / RM-666).